A 696-amino-acid polypeptide reads, in one-letter code: DNA-directed RNA polymerase subunit beta N-terminal section (696 aa).

The protein belongs to the RNA polymerase beta chain family. In terms of assembly, in plastids the minimal PEP RNA polymerase catalytic core is composed of four subunits: alpha, beta, beta', and beta''. When a (nuclear-encoded) sigma factor is associated with the core the holoenzyme is formed, which can initiate transcription.

The protein localises to the plastid. The protein resides in the chloroplast. It catalyses the reaction RNA(n) + a ribonucleoside 5'-triphosphate = RNA(n+1) + diphosphate. In terms of biological role, DNA-dependent RNA polymerase catalyzes the transcription of DNA into RNA using the four ribonucleoside triphosphates as substrates. The protein is DNA-directed RNA polymerase subunit beta N-terminal section (rpoB1) of Stigeoclonium helveticum (Green alga).